The following is a 63-amino-acid chain: Conotoxin Cl14.11 (63 aa).

The first 21 residues, 1 to 21 (MRFLLLLTVALLLTCIMETDA), serve as a signal peptide directing secretion. The propeptide occupies 22–34 (EAKPEDLAERFRE).

Post-translationally, contains 2 disulfide bond. As to expression, expressed by the venom duct.

It localises to the secreted. This Californiconus californicus (California cone) protein is Conotoxin Cl14.11.